We begin with the raw amino-acid sequence, 263 residues long: Polyamine aminopropyltransferase (263 aa).

Positions Met-1–Lys-221 constitute a PABS domain. S-methyl-5'-thioadenosine contacts are provided by residues Asp-98 and Asp-126–Gly-127. Catalysis depends on Asp-144, which acts as the Proton acceptor.

It belongs to the spermidine/spermine synthase family. Homodimer or homotetramer.

It localises to the cytoplasm. The catalysed reaction is S-adenosyl 3-(methylsulfanyl)propylamine + putrescine = S-methyl-5'-thioadenosine + spermidine + H(+). Its pathway is amine and polyamine biosynthesis; spermidine biosynthesis; spermidine from putrescine: step 1/1. In terms of biological role, catalyzes the irreversible transfer of a propylamine group from the amino donor S-adenosylmethioninamine (decarboxy-AdoMet) to putrescine (1,4-diaminobutane) to yield spermidine. The sequence is that of Polyamine aminopropyltransferase from Neisseria meningitidis serogroup A / serotype 4A (strain DSM 15465 / Z2491).